The sequence spans 461 residues: Calcitonin gene-related peptide type 1 receptor (461 aa).

An N-terminal signal peptide occupies residues 1–22; sequence MEKKCTLYFLVLLPFFMILVTA. Residues 23–139 lie on the Extracellular side of the membrane; that stretch reads ELEESPEDSI…NTHEKVKTAL (117 aa). 3 disulfide bridges follow: Cys48–Cys74, Cys65–Cys105, and Cys88–Cys127. N-linked (GlcNAc...) asparagine glycans are attached at residues Asn66, Asn118, and Asn123. The chain crosses the membrane as a helical span at residues 140 to 164; the sequence is NLFYLTIIGHGLSIASLLISLGIFF. Over 165 to 175 the chain is Cytoplasmic; it reads YFKSLSCQRIT. A helical transmembrane segment spans residues 176–198; the sequence is LHKNLFFSFVCNSVVTIIHLTAV. At 199-209 the chain is on the extracellular side; sequence ANNQALVATNP. A helical membrane pass occupies residues 210–238; it reads VSCKVSQFIHLYLMGCNYFWMLCEGIYLH. At 239 to 252 the chain is on the cytoplasmic side; the sequence is TLIVVAVFAEKQHL. Residues 253-273 traverse the membrane as a helical segment; that stretch reads MWYYFLGWGFPLIPACIHAIA. Residues 274 to 289 are Extracellular-facing; the sequence is RSLYYNDNCWISSDTH. Residues 288-289 form a required for RAMP3 interaction region; it reads TH. Residues 290–314 form a helical membrane-spanning segment; it reads LLYIIHGPICAALLVNLFFLLNIVR. Residues 315 to 329 lie on the Cytoplasmic side of the membrane; that stretch reads VLITKLKVTHQAESN. The helical transmembrane segment at 330 to 351 threads the bilayer; sequence LYMKAVRATLILVPLLGIEFVL. Topologically, residues 352–366 are extracellular; the sequence is IPWRPEGKIAEEVYD. A helical membrane pass occupies residues 367 to 387; it reads YIMHILMHFQGLLVSTIFCFF. Ser420 and Ser445 each carry phosphoserine.

This sequence belongs to the G-protein coupled receptor 2 family. Heterodimer of CALCRL and RAMP1; the receptor complex functions as CGRP receptor. Heterodimer of CALCRL and RAMP2 or CALCRL and RAMP3; the complexes function as adrenomedullin receptor. As to expression, predominantly expressed in the lung and heart.

It is found in the cell membrane. Its function is as follows. G protein-coupled receptor which specificity is determined by its interaction with receptor-activity-modifying proteins (RAMPs). Together with RAMP1, form the receptor complex for calcitonin-gene-related peptides CALCA/CGRP1 and CALCB/CGRP2. Together with RAMP2 or RAMP3, function as receptor complexes for adrenomedullin (ADM and ADM2). Ligand binding causes a conformation change that triggers signaling via guanine nucleotide-binding proteins (G proteins) and modulates the activity of downstream effectors. Activates cAMP-dependent pathway. In Homo sapiens (Human), this protein is Calcitonin gene-related peptide type 1 receptor.